The primary structure comprises 321 residues: Phospho-N-acetylmuramoyl-pentapeptide-transferase (321 aa).

10 helical membrane passes run 1–21, 50–70, 76–96, 112–132, 140–160, 173–193, 198–218, 225–245, 250–270, and 300–320; these read MVYL…PVLI, MGGL…IIFI, IILL…DDYI, FLAQ…FNLT, IPFI…IVFW, GLDG…AIMA, ATSI…FLPF, VFMG…ISIM, LSLL…MIQV, and VVTV…WIGV.

The protein belongs to the glycosyltransferase 4 family. MraY subfamily. The cofactor is Mg(2+).

It is found in the cell membrane. The catalysed reaction is UDP-N-acetyl-alpha-D-muramoyl-L-alanyl-gamma-D-glutamyl-L-lysyl-D-alanyl-D-alanine + di-trans,octa-cis-undecaprenyl phosphate = Mur2Ac(oyl-L-Ala-gamma-D-Glu-L-Lys-D-Ala-D-Ala)-di-trans,octa-cis-undecaprenyl diphosphate + UMP. It functions in the pathway cell wall biogenesis; peptidoglycan biosynthesis. Its function is as follows. Catalyzes the initial step of the lipid cycle reactions in the biosynthesis of the cell wall peptidoglycan: transfers peptidoglycan precursor phospho-MurNAc-pentapeptide from UDP-MurNAc-pentapeptide onto the lipid carrier undecaprenyl phosphate, yielding undecaprenyl-pyrophosphoryl-MurNAc-pentapeptide, known as lipid I. This Staphylococcus saprophyticus subsp. saprophyticus (strain ATCC 15305 / DSM 20229 / NCIMB 8711 / NCTC 7292 / S-41) protein is Phospho-N-acetylmuramoyl-pentapeptide-transferase.